The chain runs to 184 residues: NADH-quinone oxidoreductase subunit B (184 aa).

[4Fe-4S] cluster is bound by residues C37, C38, C103, and C132.

This sequence belongs to the complex I 20 kDa subunit family. As to quaternary structure, NDH-1 is composed of 14 different subunits. Subunits NuoB, C, D, E, F, and G constitute the peripheral sector of the complex. [4Fe-4S] cluster serves as cofactor.

Its subcellular location is the cell membrane. It catalyses the reaction a quinone + NADH + 5 H(+)(in) = a quinol + NAD(+) + 4 H(+)(out). NDH-1 shuttles electrons from NADH, via FMN and iron-sulfur (Fe-S) centers, to quinones in the respiratory chain. The immediate electron acceptor for the enzyme in this species is believed to be a menaquinone. Couples the redox reaction to proton translocation (for every two electrons transferred, four hydrogen ions are translocated across the cytoplasmic membrane), and thus conserves the redox energy in a proton gradient. This Mycolicibacterium gilvum (strain PYR-GCK) (Mycobacterium gilvum (strain PYR-GCK)) protein is NADH-quinone oxidoreductase subunit B.